The following is a 526-amino-acid chain: Probable Xaa-Pro aminopeptidase GLRG_02280 (526 aa).

Residues D285, D296, E454, and E495 each contribute to the Mn(2+) site.

This sequence belongs to the peptidase M24B family. Mn(2+) serves as cofactor.

The enzyme catalyses Release of any N-terminal amino acid, including proline, that is linked to proline, even from a dipeptide or tripeptide.. In terms of biological role, catalyzes the removal of a penultimate prolyl residue from the N-termini of peptides. In Colletotrichum graminicola (strain M1.001 / M2 / FGSC 10212) (Maize anthracnose fungus), this protein is Probable Xaa-Pro aminopeptidase GLRG_02280.